A 452-amino-acid polypeptide reads, in one-letter code: MKASAVTAALAVGASTVLAAPSIKARDDVTPITVKGNAFFKGDERFYIRGVDYQPGGSSDLADPIADADGCKRDIAKFKELGLNTIRVYSVDNSKNHDECMNALADAGIYLVLDVNTPKYSINRAKPKESYNDVYLQYIFATVDAFAGYKNTLAFFSGNEVINDGPSSSAAPYVKAVTRDLRQYIRSRKYREIPVGYSAADIDTNRLQMAQYMNCGSDDERSDFFAFNDYSWCDPSSFKTSGWDQKVKNFTGYGLPLFLSEYGCNTNKRQFQEVSSLYSTDMTGVYSGGLVYEYSQEASNYGLVEISGNNVKELPDFDALKTAFEKTSNPSGDGNYNKTGGANPCPAKDAPNWDVDNDALPAIPEPAKKYMTEGAGKGPGFAGPGSQDRGTQSTATAEPGSGSATGSSSSGTSTSSKGAAAGLTVPSLTMAPVVVGAVTLLSTVFGAGLVLL.

Residues 1 to 19 (MKASAVTAALAVGASTVLA) form the signal peptide. C71 and C100 are disulfide-bonded. Residues Y89, N159, E160, D201, and R206 each contribute to the (1,3-beta-D-glucosyl)n site. E160 acts as the Proton donor in catalysis. Disulfide bonds link C215–C345 and C233–C264. N-linked (GlcNAc...) asparagine glycosylation occurs at N249. E261 functions as the Nucleophile in the catalytic mechanism. Y292 is a binding site for (1,3-beta-D-glucosyl)n. Residues 325 to 340 (EKTSNPSGDGNYNKTG) show a composition bias toward polar residues. The segment at 325–419 (EKTSNPSGDG…SGTSTSSKGA (95 aa)) is disordered. A glycan (N-linked (GlcNAc...) asparagine) is linked at N337. Residues 393–419 (STATAEPGSGSATGSSSSGTSTSSKGA) show a composition bias toward low complexity. A419 carries GPI-like-anchor amidated alanine lipidation. Positions 420–452 (AAGLTVPSLTMAPVVVGAVTLLSTVFGAGLVLL) are cleaved as a propeptide — removed in mature form.

The protein belongs to the glycosyl hydrolase 72 family. Post-translationally, the GPI-like anchor contains a phosphoceramide lipid group. The anchor position has not been determined.

The protein localises to the cell membrane. Splits internally a 1,3-beta-glucan molecule and transfers the newly generated reducing end (the donor) to the non-reducing end of another 1,3-beta-glucan molecule (the acceptor) forming a 1,3-beta linkage, resulting in the elongation of 1,3-beta-glucan chains in the cell wall. Involved in cell wall morphogenesis. This chain is 1,3-beta-glucanosyltransferase gel1 (gel1), found in Aspergillus fumigatus (strain CBS 144.89 / FGSC A1163 / CEA10) (Neosartorya fumigata).